A 279-amino-acid polypeptide reads, in one-letter code: METESTGTPTGETRLALVRRARRIDRILAETYPYAVAELDFETPFELLVATVLSAQTTDVRVNAATPALFARFPDAHAMAAATEPELQELVRSTGFYRNKASAILRLSQELVGRHDGEVPARLEDLVALPGVGRKTAFVVLGNAFGQPGITVDTHFGRLARRLGFTDETDPGKGRARRGRPVPPARDWTMLSHRLIFHGRRVCHARRPACGRCPIARWCPSYAAGETDPERARALLAYELKPGREELLELLRAGRTAGAAGPRPRAGGXAPGLPAQPFR.

Positions 123–142 (LEDLVALPGVGRKTAFVVLG) constitute a HhH domain. Cysteine 203, cysteine 210, cysteine 213, and cysteine 219 together coordinate [4Fe-4S] cluster. Residues 256 to 279 (TAGAAGPRPRAGGXAPGLPAQPFR) form a disordered region.

It belongs to the Nth/MutY family. [4Fe-4S] cluster is required as a cofactor.

Its function is as follows. DNA repair enzyme that has both DNA N-glycosylase activity and AP-lyase activity. Initiates repair at cis-syn pyrimidine dimers. Proceeds via an imino enzyme:DNA intermediate. In Micrococcus luteus (strain ATCC 4698 / DSM 20030 / JCM 1464 / CCM 169 / CCUG 5858 / IAM 1056 / NBRC 3333 / NCIMB 9278 / NCTC 2665 / VKM Ac-2230) (Micrococcus lysodeikticus), this protein is Ultraviolet N-glycosylase/AP lyase (pdg).